The primary structure comprises 277 residues: Large ribosomal subunit protein uL2 (277 aa).

A disordered region spans residues 223-261; that stretch reads SVMNPNDHPHGGGEGKSPVGRPSPVTPWGKPALGYKTRK.

It belongs to the universal ribosomal protein uL2 family. In terms of assembly, part of the 50S ribosomal subunit. Forms a bridge to the 30S subunit in the 70S ribosome.

In terms of biological role, one of the primary rRNA binding proteins. Required for association of the 30S and 50S subunits to form the 70S ribosome, for tRNA binding and peptide bond formation. It has been suggested to have peptidyltransferase activity; this is somewhat controversial. Makes several contacts with the 16S rRNA in the 70S ribosome. The protein is Large ribosomal subunit protein uL2 of Clostridium botulinum (strain Alaska E43 / Type E3).